A 122-amino-acid polypeptide reads, in one-letter code: Large ribosomal subunit protein uL14 (122 aa).

Belongs to the universal ribosomal protein uL14 family. In terms of assembly, part of the 50S ribosomal subunit. Forms a cluster with proteins L3 and L19. In the 70S ribosome, L14 and L19 interact and together make contacts with the 16S rRNA in bridges B5 and B8.

Functionally, binds to 23S rRNA. Forms part of two intersubunit bridges in the 70S ribosome. The chain is Large ribosomal subunit protein uL14 from Paenarthrobacter aurescens (strain TC1).